Consider the following 258-residue polypeptide: Phosphoribosylaminoimidazole-succinocarboxamide synthase (258 aa).

The protein belongs to the SAICAR synthetase family.

It catalyses the reaction 5-amino-1-(5-phospho-D-ribosyl)imidazole-4-carboxylate + L-aspartate + ATP = (2S)-2-[5-amino-1-(5-phospho-beta-D-ribosyl)imidazole-4-carboxamido]succinate + ADP + phosphate + 2 H(+). It functions in the pathway purine metabolism; IMP biosynthesis via de novo pathway; 5-amino-1-(5-phospho-D-ribosyl)imidazole-4-carboxamide from 5-amino-1-(5-phospho-D-ribosyl)imidazole-4-carboxylate: step 1/2. The sequence is that of Phosphoribosylaminoimidazole-succinocarboxamide synthase from Sphingopyxis alaskensis (strain DSM 13593 / LMG 18877 / RB2256) (Sphingomonas alaskensis).